A 530-amino-acid chain; its full sequence is Polyprotein pp62 (530 aa).

Belongs to the asfivirus polyprotein pp62 family. In terms of assembly, monomer. Predominantly exists as a monomer, with very little dimers. Homodimerization seems to be linked to low pH. As to quaternary structure, homodimer; disulfide-linked. Homotrimer; disulfide-linked. Homohexamer. In terms of processing, monoubiquitinated in vitro by viral UBCv1. Post-translationally, specific enzymatic cleavages in vivo by the viral pS273R protease yield mature proteins.

Its subcellular location is the host cytoplasm. It localises to the host perinuclear region. The protein resides in the virion. Functionally, essential for the correct assembly and maturation of the core of the virion. Component of the core shell. Binds to phosphatidylserine, which may enable the core shell binding with the inner membrane. Its function is as follows. Component of the core shell. Binds to phosphatidylserine and DNA, which may link the core shell to the inner membrane and to the viral nucleoid. In terms of biological role, component of the core shell. The polypeptide is Polyprotein pp62 (African swine fever virus (strain Badajoz 1971 Vero-adapted) (Ba71V)).